We begin with the raw amino-acid sequence, 604 residues long: Kinesin-like protein KIN-14O (604 aa).

Residues 22–61 adopt a coiled-coil conformation; it reads MLNHDKDISALQEEISALRSRQRHLDHRRQEALDKLIDLK. Residues 63 to 387 form the Kinesin motor domain; the sequence is SIRVFCRVRP…LSFAKRARSI (325 aa). An ATP-binding site is contributed by 141 to 148; sequence GQTGTGKT. A coiled-coil region spans residues 383–443; it reads RARSIESSKE…EERKKLSSSA (61 aa). Disordered regions lie at residues 465–511 and 565–604; these read DSAE…KTRL and SNNS…SSLT. Residues 565 to 574 are compositionally biased toward polar residues; that stretch reads SNNSIDSTAA. Basic residues predominate over residues 593-604; sequence LHQHRRRMSSLT.

Belongs to the TRAFAC class myosin-kinesin ATPase superfamily. Kinesin family. KIN-14 subfamily.

The protein is Kinesin-like protein KIN-14O of Oryza sativa subsp. japonica (Rice).